We begin with the raw amino-acid sequence, 341 residues long: UPF0283 membrane protein HD_1769 (341 aa).

3 consecutive transmembrane segments (helical) span residues 57–77 (LLAV…QCLI), 86–106 (IDLA…GAII), and 204–224 (ENAI…MIAW).

Belongs to the UPF0283 family.

The protein resides in the cell inner membrane. The polypeptide is UPF0283 membrane protein HD_1769 (Haemophilus ducreyi (strain 35000HP / ATCC 700724)).